A 100-amino-acid polypeptide reads, in one-letter code: Small ribosomal subunit protein uS14 (100 aa).

It belongs to the universal ribosomal protein uS14 family. In terms of assembly, part of the 30S ribosomal subunit. Contacts proteins S3 and S10.

In terms of biological role, binds 16S rRNA, required for the assembly of 30S particles and may also be responsible for determining the conformation of the 16S rRNA at the A site. The protein is Small ribosomal subunit protein uS14 of Synechocystis sp. (strain ATCC 27184 / PCC 6803 / Kazusa).